The chain runs to 302 residues: Lipoyl synthase (302 aa).

7 residues coordinate [4Fe-4S] cluster: Cys-44, Cys-49, Cys-55, Cys-70, Cys-74, Cys-77, and Ser-283. Residues 56–272 (WSKKHATVMI…AKVARSKGFL (217 aa)) enclose the Radical SAM core domain.

The protein belongs to the radical SAM superfamily. Lipoyl synthase family. It depends on [4Fe-4S] cluster as a cofactor.

It localises to the cytoplasm. It catalyses the reaction [[Fe-S] cluster scaffold protein carrying a second [4Fe-4S](2+) cluster] + N(6)-octanoyl-L-lysyl-[protein] + 2 oxidized [2Fe-2S]-[ferredoxin] + 2 S-adenosyl-L-methionine + 4 H(+) = [[Fe-S] cluster scaffold protein] + N(6)-[(R)-dihydrolipoyl]-L-lysyl-[protein] + 4 Fe(3+) + 2 hydrogen sulfide + 2 5'-deoxyadenosine + 2 L-methionine + 2 reduced [2Fe-2S]-[ferredoxin]. Its pathway is protein modification; protein lipoylation via endogenous pathway; protein N(6)-(lipoyl)lysine from octanoyl-[acyl-carrier-protein]: step 2/2. Functionally, catalyzes the radical-mediated insertion of two sulfur atoms into the C-6 and C-8 positions of the octanoyl moiety bound to the lipoyl domains of lipoate-dependent enzymes, thereby converting the octanoylated domains into lipoylated derivatives. The protein is Lipoyl synthase of Orientia tsutsugamushi (strain Boryong) (Rickettsia tsutsugamushi).